A 71-amino-acid polypeptide reads, in one-letter code: Protein SlyX homolog (71 aa).

The protein belongs to the SlyX family.

The protein is Protein SlyX homolog of Azotobacter vinelandii (strain DJ / ATCC BAA-1303).